Consider the following 1045-residue polypeptide: Septation initiation network scaffold protein cdc11 (1045 aa).

Residues 1 to 11 (MEQLWLEHDLS) are compositionally biased toward basic and acidic residues. Disordered regions lie at residues 1–269 (MEQL…NTKD) and 282–329 (RGRM…PSLS). Over residues 18–39 (PQEQGSDNSSEPPTTSNVNNTQ) the composition is skewed to polar residues. Composition is skewed to low complexity over residues 40–52 (STGR…STEH), 96–132 (KQSP…NVSN), and 152–165 (ISSS…SEGS). The segment covering 166–176 (LKSQQSNTRSN) has biased composition (polar residues). The segment covering 187-201 (ASNASSSSSVVSSPS) has biased composition (low complexity). 2 stretches are compositionally biased toward polar residues: residues 226-238 (NQLT…NSFE) and 320-329 (DSSNAFPSLS). The residue at position 360 (serine 360) is a Phosphoserine. Residues 377 to 417 (DVGSSQSSSKTARLNSSPKSTLKTSSVKTRRSHSAQSSRKV) are disordered. Polar residues predominate over residues 379-403 (GSSQSSSKTARLNSSPKSTLKTSSV). Phosphoserine is present on serine 558. LRR repeat units follow at residues 604 to 625 (RIIQ…SELC), 627 to 646 (SIEE…GCPV), 647 to 668 (TIRD…SNLL), 669 to 690 (NLQY…SSLI), 691 to 712 (HLRE…QHLD), 713 to 734 (GLLK…NSNL), 736 to 757 (RLEE…SSLQ), 758 to 779 (NLMV…QPMI), 780 to 801 (HLRI…QFPH), 802 to 822 (LRTL…RRLK), 846 to 867 (DIRN…HMFL), 868 to 889 (GVRY…IATS), 892 to 913 (NLRV…KPLQ), 914 to 935 (MIHR…CDIL), and 940 to 962 (QLNV…IDDS). Residues 1005 to 1043 (AWRTRRKMYAEAILLACPHLEWLDGSDVSQSSRAAFTKS) enclose the LRRCT domain.

In terms of assembly, interacts with sid4. When hyperphosphorylated, interacts with byr4. Also interacts with spg1, sid2, cdc13 and cdc16. Post-translationally, phosphorylated by cdc7 and cdk1. Hyperphosphorylated during anaphase. Dephosphorylated by par1.

The protein resides in the cytoplasm. The protein localises to the cytoskeleton. Its subcellular location is the microtubule organizing center. It localises to the spindle pole body. Its function is as follows. Essential for the onset of septum formation. Involved in the organization of astral microtubules during mitosis. Acts as a bridge between sid4 and the other SIN proteins mediating their association with the spindle pole body (SPB). The sid4-cdc11 complex organizes a signaling hub on the SPB which coordinates cell and nuclear division. In Schizosaccharomyces pombe (strain 972 / ATCC 24843) (Fission yeast), this protein is Septation initiation network scaffold protein cdc11 (cdc11).